A 703-amino-acid chain; its full sequence is Histone-lysine N-methyltransferase SETDB2 (703 aa).

The 71-residue stretch at F178–R248 folds into the MBD domain. Residues K310–G384 enclose the Pre-SET domain. C312, C314, C318, C324, C326, C365, C369, C371, and C376 together coordinate Zn(2+). The region spanning L387–S678 is the SET domain. K397 to W399 serves as a coordination point for S-adenosyl-L-methionine. A disordered region spans residues T492–P588. The segment covering R511–R525 has biased composition (basic residues). Residues P550–I560 are compositionally biased toward polar residues. Residues S571–G586 are compositionally biased toward low complexity. Residues R632 and N635 to H636 contribute to the S-adenosyl-L-methionine site. Zn(2+) contacts are provided by C638, C691, C693, and C698.

This sequence belongs to the class V-like SAM-binding methyltransferase superfamily.

The protein resides in the nucleus. Its subcellular location is the chromosome. It catalyses the reaction N(6),N(6)-dimethyl-L-lysyl(9)-[histone H3] + S-adenosyl-L-methionine = N(6),N(6),N(6)-trimethyl-L-lysyl(9)-[histone H3] + S-adenosyl-L-homocysteine + H(+). In terms of biological role, histone methyltransferase involved in left-right axis specification in early development and mitosis. Specifically trimethylates 'Lys-9' of histone H3 (H3K9me3). H3K9me3 is a specific tag for epigenetic transcriptional repression that recruits HP1 (CBX1, CBX3 and/or CBX5) proteins to methylated histones. Contributes to H3K9me3 in both the interspersed repetitive elements and centromere-associated repeats. Plays a role in chromosome condensation and segregation during mitosis. The sequence is that of Histone-lysine N-methyltransferase SETDB2 (setdb2) from Xenopus laevis (African clawed frog).